The chain runs to 217 residues: Probable transaldolase (217 aa).

Lysine 83 serves as the catalytic Schiff-base intermediate with substrate.

Belongs to the transaldolase family. Type 3B subfamily.

The protein resides in the cytoplasm. The enzyme catalyses D-sedoheptulose 7-phosphate + D-glyceraldehyde 3-phosphate = D-erythrose 4-phosphate + beta-D-fructose 6-phosphate. The protein operates within carbohydrate degradation; pentose phosphate pathway; D-glyceraldehyde 3-phosphate and beta-D-fructose 6-phosphate from D-ribose 5-phosphate and D-xylulose 5-phosphate (non-oxidative stage): step 2/3. Transaldolase is important for the balance of metabolites in the pentose-phosphate pathway. This Sinorhizobium medicae (strain WSM419) (Ensifer medicae) protein is Probable transaldolase.